The chain runs to 185 residues: MANAIIEKAKERMTQSHQSLAREFGGIRAGRANASLLDRVHVEYYGVETPLNQIASITIPEARVLLVTPFDKSSLKDIERALNASDLGITPANDGSVIRLVIPALTEETRRDLAKEVKKVGENAKVAVRNIRRDAMDEAKKQEKAKEITEDELKTLEKDIQKVTDDAVKHIDDMTANKEKELLEV.

This sequence belongs to the RRF family.

It localises to the cytoplasm. Responsible for the release of ribosomes from messenger RNA at the termination of protein biosynthesis. May increase the efficiency of translation by recycling ribosomes from one round of translation to another. The chain is Ribosome-recycling factor from Streptococcus pneumoniae (strain 70585).